The primary structure comprises 815 residues: Phosphate transporter PHO1-2 (815 aa).

Over 1 to 421 (MVKFSREYEA…QQPRNTHMIT (421 aa)) the chain is Cytoplasmic. An SPX domain is found at 2–368 (VKFSREYEAS…EQQRATDLFS (367 aa)). 3 disordered regions span residues 83–108 (SAGQ…STDK), 166–213 (RGLA…LELQ), and 242–266 (AGKK…GGGG). Residues 97–108 (PDRGELVRSTDK) show a composition bias toward basic and acidic residues. Low complexity predominate over residues 183–201 (PPSSVHGSSGRYLLSGLSS). Over residues 202–213 (PQSMSDGSLELQ) the composition is skewed to polar residues. The segment covering 243-254 (GKKDGKTKDGSG) has biased composition (basic and acidic residues). Positions 255–266 (KGRGGGGGGGGG) are enriched in gly residues. The helical transmembrane segment at 422–442 (FLVGLFTGTFVSLFIIYAILA) threads the bilayer. Over 443–458 (HVSGIFTSTGNSAYME) the chain is Extracellular. Residues 459 to 479 (IVYHVFSMFALISLHIFLYGC) form a helical membrane-spanning segment. The Cytoplasmic segment spans residues 480-508 (NLFMWKNTRINHNFIFDFSSNTALTHRDA). The chain crosses the membrane as a helical span at residues 509 to 529 (FLMSASIMCTVVAALVINLFL). The Extracellular portion of the chain corresponds to 530-538 (KNAGVAYAN). Residues 539-559 (ALPGALLLLSTGVLFCPFDIF) traverse the membrane as a helical segment. Over 560–686 (YRSTRYCFMR…VRFKYAATPT (127 aa)) the chain is Cytoplasmic. The EXS domain maps to 624–815 (TSGQQYKHLA…PLPFRELETD (192 aa)). Residues 687–707 (PFWVWMVIISSSGATIYQLYW) form a helical membrane-spanning segment. Topologically, residues 708-734 (DFVKDWGFLNPKSKNRWLRNELILKNK) are extracellular. A helical membrane pass occupies residues 735–751 (SIYYVSMMLNLALRLAW). Residues 752–815 (TESVMKIHIG…PLPFRELETD (64 aa)) lie on the Cytoplasmic side of the membrane.

This sequence belongs to the SYG1 (TC 2.A.94) family. Specifically expressed in roots.

It localises to the cell membrane. Its function is as follows. Involved in the transfer of inorganic phosphate (Pi) from roots to shoots. The polypeptide is Phosphate transporter PHO1-2 (PHO1-2) (Oryza sativa subsp. japonica (Rice)).